A 123-amino-acid polypeptide reads, in one-letter code: Large ribosomal subunit protein bL12 (123 aa).

The protein belongs to the bacterial ribosomal protein bL12 family. Homodimer. Part of the ribosomal stalk of the 50S ribosomal subunit. Forms a multimeric L10(L12)X complex, where L10 forms an elongated spine to which 2 to 4 L12 dimers bind in a sequential fashion. Binds GTP-bound translation factors.

Functionally, forms part of the ribosomal stalk which helps the ribosome interact with GTP-bound translation factors. Is thus essential for accurate translation. The protein is Large ribosomal subunit protein bL12 of Shewanella sp. (strain ANA-3).